Here is a 254-residue protein sequence, read N- to C-terminus: Probable transcriptional regulatory protein MAE_13580 (254 aa).

It belongs to the TACO1 family.

The protein resides in the cytoplasm. In Microcystis aeruginosa (strain NIES-843 / IAM M-2473), this protein is Probable transcriptional regulatory protein MAE_13580.